The chain runs to 99 residues: Aspartyl/glutamyl-tRNA(Asn/Gln) amidotransferase subunit C (99 aa).

It belongs to the GatC family. In terms of assembly, heterotrimer of A, B and C subunits.

The catalysed reaction is L-glutamyl-tRNA(Gln) + L-glutamine + ATP + H2O = L-glutaminyl-tRNA(Gln) + L-glutamate + ADP + phosphate + H(+). It catalyses the reaction L-aspartyl-tRNA(Asn) + L-glutamine + ATP + H2O = L-asparaginyl-tRNA(Asn) + L-glutamate + ADP + phosphate + 2 H(+). In terms of biological role, allows the formation of correctly charged Asn-tRNA(Asn) or Gln-tRNA(Gln) through the transamidation of misacylated Asp-tRNA(Asn) or Glu-tRNA(Gln) in organisms which lack either or both of asparaginyl-tRNA or glutaminyl-tRNA synthetases. The reaction takes place in the presence of glutamine and ATP through an activated phospho-Asp-tRNA(Asn) or phospho-Glu-tRNA(Gln). The protein is Aspartyl/glutamyl-tRNA(Asn/Gln) amidotransferase subunit C of Ralstonia pickettii (strain 12J).